The primary structure comprises 127 residues: Protein ApaG (127 aa).

The 125-residue stretch at 3 to 127 (NDQKYDIKVQ…FILSVPRVLH (125 aa)) folds into the ApaG domain.

This is Protein ApaG from Nitrosomonas eutropha (strain DSM 101675 / C91 / Nm57).